The chain runs to 59 residues: Conotoxin Ts-03 (59 aa).

The N-terminal stretch at M1–S19 is a signal peptide. The propeptide occupies V20–A47.

The protein belongs to the conotoxin T superfamily. Contains 2 disulfide bonds that can be either 'C1-C3, C2-C4' or 'C1-C4, C2-C3', since these disulfide connectivities have been observed for conotoxins with cysteine framework V (for examples, see AC P0DQQ7 and AC P81755). In terms of tissue distribution, expressed by the venom duct.

It localises to the secreted. The sequence is that of Conotoxin Ts-03 from Conus tessulatus (Tessellate cone).